The sequence spans 227 residues: Zinc finger protein ZAT10 (227 aa).

The C2H2-type 1 zinc finger occupies 80–102 (YKCSVCDKTFSSYQALGGHKASH). The segment at 96 to 128 (GGHKASHRKNLSQTLSGGGDDHSTSSATTTSAV) is disordered. Over residues 119 to 128 (TSSATTTSAV) the composition is skewed to low complexity. Residues 136-158 (HVCTICNKSFPSGQALGGHKRCH) form a C2H2-type 2 zinc finger. The disordered stretch occupies residues 168–189 (SSVSNSEGAGSTSHVSSSHRGF). A compositionally biased stretch (polar residues) spans 174-186 (EGAGSTSHVSSSH).

Expressed in roots, stems and leaves.

It is found in the nucleus. Its function is as follows. Transcriptional repressor involved in abiotic stress responses. Can repress the stress responsive genes DREB1A and LTI78. Probably involved in jasmonate (JA) early signaling response. May regulate the expression of the JA biosynthesis gene LOX3 and control the expression of TIFY10A/JAZ1, a key repressor in the JA signaling cascade. This Arabidopsis thaliana (Mouse-ear cress) protein is Zinc finger protein ZAT10 (ZAT10).